The following is a 550-amino-acid chain: MTKFIFVTGGVVSSLGKGITSASLGALLEARGLAVTLVKLDPYINVDPGTMSPYQHGEVFVTGDGAETDLDLGHYERFVRMTMSRRNNYTTGRIYENVIAQERRGAYLGNTVQVIPHITDEIKRCICAGADNAQVVLVEIGGTVGDIESLPFLEAIRQMGVELGREQTLFMHLTLIPFIRSAGELKTKPTQHSVKELRSIGIQPDVLVCRLEHPLPESERRKIALFTSVPERAVISAVDVDSIYKIPLELYAQKLDEIVVEQLGLETGPANLTEWQRVIDGLEHPHDEVTITLVGKYVDHREAYKSLSEALIHGGIHTRTRVNITYLDSEEIEAQGIGGLESADAILIPGGFGERGVEGMIIAVQYARENGVPYLGICLGMQVAVIEFARHQAGMKEAHSTEFSEHTPDPVIALITEWRRADGSIERRDEQMGLGGTMRLGNYECELLPGSRAAALYGQERITERHRHRYEFNNDYRELLEGAGLVMAGTSFDGNLVEMVEISHHPWFVACQFHPEFTSTPRDGHPLFNSFIRAAAEHRRRVTLKSSRDS.

The tract at residues 1-265 (MTKFIFVTGG…DEIVVEQLGL (265 aa)) is amidoligase domain. Ser-13 serves as a coordination point for CTP. Ser-13 contacts UTP. 14 to 19 (SLGKGI) provides a ligand contact to ATP. An L-glutamine-binding site is contributed by Tyr-54. Residue Asp-71 coordinates ATP. The Mg(2+) site is built by Asp-71 and Glu-139. Residues 146–148 (DIE), 186–191 (KTKPTQ), and Lys-222 each bind CTP. Residues 186–191 (KTKPTQ) and Lys-222 contribute to the UTP site. The Glutamine amidotransferase type-1 domain maps to 290 to 541 (TITLVGKYVD…IRAAAEHRRR (252 aa)). An L-glutamine-binding site is contributed by Gly-351. The Nucleophile; for glutamine hydrolysis role is filled by Cys-378. Residues 379-382 (LGMQ), Glu-402, and Arg-469 contribute to the L-glutamine site. Active-site residues include His-514 and Glu-516.

This sequence belongs to the CTP synthase family. In terms of assembly, homotetramer.

The catalysed reaction is UTP + L-glutamine + ATP + H2O = CTP + L-glutamate + ADP + phosphate + 2 H(+). The enzyme catalyses L-glutamine + H2O = L-glutamate + NH4(+). It carries out the reaction UTP + NH4(+) + ATP = CTP + ADP + phosphate + 2 H(+). It functions in the pathway pyrimidine metabolism; CTP biosynthesis via de novo pathway; CTP from UDP: step 2/2. Its activity is regulated as follows. Allosterically activated by GTP, when glutamine is the substrate; GTP has no effect on the reaction when ammonia is the substrate. The allosteric effector GTP functions by stabilizing the protein conformation that binds the tetrahedral intermediate(s) formed during glutamine hydrolysis. Inhibited by the product CTP, via allosteric rather than competitive inhibition. Its function is as follows. Catalyzes the ATP-dependent amination of UTP to CTP with either L-glutamine or ammonia as the source of nitrogen. Regulates intracellular CTP levels through interactions with the four ribonucleotide triphosphates. The sequence is that of CTP synthase from Nitrosococcus oceani (strain ATCC 19707 / BCRC 17464 / JCM 30415 / NCIMB 11848 / C-107).